Reading from the N-terminus, the 58-residue chain is Sec-independent protein translocase protein TatA (58 aa).

Residues 1-21 form a helical membrane-spanning segment; the sequence is MLSNIGFPGLILILVAILILF.

This sequence belongs to the TatA/E family. Forms a complex with TatC.

Its subcellular location is the cell membrane. Functionally, part of the twin-arginine translocation (Tat) system that transports large folded proteins containing a characteristic twin-arginine motif in their signal peptide across membranes. TatA could form the protein-conducting channel of the Tat system. The polypeptide is Sec-independent protein translocase protein TatA (Bacillus cytotoxicus (strain DSM 22905 / CIP 110041 / 391-98 / NVH 391-98)).